The chain runs to 262 residues: Sugar fermentation stimulation protein homolog (262 aa).

This sequence belongs to the SfsA family.

The chain is Sugar fermentation stimulation protein homolog from Lawsonia intracellularis (strain PHE/MN1-00).